The chain runs to 247 residues: Probable transcriptional regulatory protein ABO_0750 (247 aa).

It belongs to the TACO1 family.

The protein resides in the cytoplasm. This Alcanivorax borkumensis (strain ATCC 700651 / DSM 11573 / NCIMB 13689 / SK2) protein is Probable transcriptional regulatory protein ABO_0750.